Reading from the N-terminus, the 922-residue chain is Phosphoenolpyruvate carboxylase (922 aa).

Positions 1–20 are disordered; the sequence is MTKTLHARPSAATDTTFAPP. Residues H142 and K581 contribute to the active site.

It belongs to the PEPCase type 1 family. Requires Mg(2+) as cofactor.

It carries out the reaction oxaloacetate + phosphate = phosphoenolpyruvate + hydrogencarbonate. Its function is as follows. Forms oxaloacetate, a four-carbon dicarboxylic acid source for the tricarboxylic acid cycle. This chain is Phosphoenolpyruvate carboxylase (ppc), found in Methylorubrum extorquens (strain ATCC 14718 / DSM 1338 / JCM 2805 / NCIMB 9133 / AM1) (Methylobacterium extorquens).